The chain runs to 136 residues: Large ribosomal subunit protein uL22 (136 aa).

The protein belongs to the universal ribosomal protein uL22 family. In terms of assembly, part of the 50S ribosomal subunit.

In terms of biological role, this protein binds specifically to 23S rRNA; its binding is stimulated by other ribosomal proteins, e.g. L4, L17, and L20. It is important during the early stages of 50S assembly. It makes multiple contacts with different domains of the 23S rRNA in the assembled 50S subunit and ribosome. Its function is as follows. The globular domain of the protein is located near the polypeptide exit tunnel on the outside of the subunit, while an extended beta-hairpin is found that lines the wall of the exit tunnel in the center of the 70S ribosome. The chain is Large ribosomal subunit protein uL22 from Bacteroides fragilis (strain YCH46).